The following is a 435-amino-acid chain: Thiosulfate sulfurtransferase YnjE (435 aa).

Positions methionine 1 to alanine 23 are cleaved as a signal peptide. 3 Rhodanese domains span residues glutamine 36–lysine 138, proline 164–arginine 270, and histidine 304–alanine 425. The active-site Cysteine persulfide intermediate is cysteine 385. Arginine 390 lines the substrate pocket.

In terms of assembly, monomer.

It is found in the periplasm. It catalyses the reaction thiosulfate + hydrogen cyanide = thiocyanate + sulfite + 2 H(+). In Escherichia coli (strain K12), this protein is Thiosulfate sulfurtransferase YnjE (ynjE).